Here is a 468-residue protein sequence, read N- to C-terminus: 5-carboxymethyl-2-hydroxymuconate semialdehyde dehydrogenase (468 aa).

Residue Glu244 is part of the active site. Cys278 functions as the Nucleophile in the catalytic mechanism.

It belongs to the aldehyde dehydrogenase family. In terms of assembly, homodimer.

It carries out the reaction 2-hydroxy-5-carboxymethylmuconate semialdehyde + NAD(+) + H2O = (2E,4Z)-5-hydroxypenta-2,4-diene-1,2,5-tricarboxylate + NADH + 2 H(+). It functions in the pathway aromatic compound metabolism; 4-hydroxyphenylacetate degradation; pyruvate and succinate semialdehyde from 4-hydroxyphenylacetate: step 3/7. Functionally, catalyzes the conversion of 5-carboxymethyl-2-hydroxy-muconic semialdehyde (CHMS) into 5-carboxymethyl-2-hydroxy-muconic acid (CHM or (2E,4Z)-5-hydroxypenta-2,4-diene-1,2,5-tricarboxylate). Is involved in a meta-cleavage pathway for the catabolism of 4-hydroxyphenylacetate (4-HPA) via homoprotocatechuate (HPC or 3,4-dihydroxyphenylacetate). This Escherichia coli protein is 5-carboxymethyl-2-hydroxymuconate semialdehyde dehydrogenase.